Consider the following 156-residue polypeptide: Phosphoribosyl-AMP cyclohydrolase (156 aa).

Asp106 contacts Mg(2+). A Zn(2+)-binding site is contributed by Cys107. Residues Asp108 and Asp110 each contribute to the Mg(2+) site. Positions 123 and 130 each coordinate Zn(2+).

This sequence belongs to the PRA-CH family. As to quaternary structure, homodimer. The cofactor is Mg(2+). Zn(2+) is required as a cofactor.

The protein localises to the cytoplasm. It catalyses the reaction 1-(5-phospho-beta-D-ribosyl)-5'-AMP + H2O = 1-(5-phospho-beta-D-ribosyl)-5-[(5-phospho-beta-D-ribosylamino)methylideneamino]imidazole-4-carboxamide. Its pathway is amino-acid biosynthesis; L-histidine biosynthesis; L-histidine from 5-phospho-alpha-D-ribose 1-diphosphate: step 3/9. Catalyzes the hydrolysis of the adenine ring of phosphoribosyl-AMP. The protein is Phosphoribosyl-AMP cyclohydrolase of Gluconobacter oxydans (strain 621H) (Gluconobacter suboxydans).